Reading from the N-terminus, the 432-residue chain is MELENDKTSSKQLQIRLVALNKRFDTSGNLLSLPSRFGCDELSETVHTLLSANDIEIPASVQFDFAINNDLLRDSLEGYVTSKNLSTESVIEVVYFQKEPPPDFLNTILHSDWIKSVRSKDDCILAGSLDGTARIWNMAGEEYAIFKGHESYVNGVEWISKDNNHATIVTASQDGTLRLWEWAIGTKSVECLCECKGHTQAVNAVTVNQSKTKICSVSSDKMIKIWSTDCSRKDDDTTHPIHKKMKTNQGLQKAVDKLPDITLSGHTDGIDAVVWPKEAEIITAGWDHRIKIWDTEVGVNKSDINVNKVVKGITCSPFQDLIAAGSFDEGIIRLYDPRVVGDQTVLKLTLKSHKNIVSSLCWSTTDEQQLVSGSFDNTVKLWDIRCNLAPLYSIEGHEDKVLAVDWSEPQYIVSGGADNRIQIYQREVAQRS.

A ubiquitin-like (UBL) domain region spans residues 13 to 97; sequence LQIRLVALNK…ESVIEVVYFQ (85 aa). WD repeat units follow at residues 109–146, 148–190, 197–236, 265–303, 305–345, 352–392, and 396–432; these read LHSD…YAIF, GHES…KSVE, GHTQ…KDDD, GHTD…NKSD, NVNK…DQTV, SHKN…APLY, and GHED…AQRS.

The protein belongs to the WD repeat WDR12/YTM1 family.

The protein localises to the nucleus. It is found in the nucleolus. It localises to the nucleoplasm. In terms of biological role, required for maturation of ribosomal RNAs and formation of the large ribosomal subunit. This Trichoplax adhaerens (Trichoplax reptans) protein is Ribosome biogenesis protein WDR12 homolog.